A 113-amino-acid chain; its full sequence is MLLLLIPVLGMIFALRDARAQSVSQHNHHVILSEAASLELGCNYSYGGTVNLFWYVQYPGQHLQLLLKYFSGDPLVKGIKGFEAEFIKSKFSFNLRKPSVQWSDTAEYFCAVN.

An N-terminal signal peptide occupies residues Met1 to Ala20. An Ig-like domain is found at Gln21–Asn113. A disulfide bridge links Cys42 with Cys110. Residue Asn43 is glycosylated (N-linked (GlcNAc...) asparagine).

As to quaternary structure, alpha-beta TR is a heterodimer composed of an alpha and beta chain; disulfide-linked. The alpha-beta TR is associated with the transmembrane signaling CD3 coreceptor proteins to form the TR-CD3 (TcR or TCR). The assembly of alpha-beta TR heterodimers with CD3 occurs in the endoplasmic reticulum where a single alpha-beta TR heterodimer associates with one CD3D-CD3E heterodimer, one CD3G-CD3E heterodimer and one CD247 homodimer forming a stable octameric structure. CD3D-CD3E and CD3G-CD3E heterodimers preferentially associate with TR alpha and TR beta chains, respectively. The association of the CD247 homodimer is the last step of TcR assembly in the endoplasmic reticulum and is required for transport to the cell surface.

Its subcellular location is the cell membrane. Functionally, v region of the variable domain of T cell receptor (TR) alpha chain that participates in the antigen recognition. Alpha-beta T cell receptors are antigen specific receptors which are essential to the immune response and are present on the cell surface of T lymphocytes. Recognize peptide-major histocompatibility (MH) (pMH) complexes that are displayed by antigen presenting cells (APC), a prerequisite for efficient T cell adaptive immunity against pathogens. Binding of alpha-beta TR to pMH complex initiates TR-CD3 clustering on the cell surface and intracellular activation of LCK that phosphorylates the ITAM motifs of CD3G, CD3D, CD3E and CD247 enabling the recruitment of ZAP70. In turn ZAP70 phosphorylates LAT, which recruits numerous signaling molecules to form the LAT signalosome. The LAT signalosome propagates signal branching to three major signaling pathways, the calcium, the mitogen-activated protein kinase (MAPK) kinase and the nuclear factor NF-kappa-B (NF-kB) pathways, leading to the mobilization of transcription factors that are critical for gene expression and essential for T cell growth and differentiation. The T cell repertoire is generated in the thymus, by V-(D)-J rearrangement. This repertoire is then shaped by intrathymic selection events to generate a peripheral T cell pool of self-MH restricted, non-autoaggressive T cells. Post-thymic interaction of alpha-beta TR with the pMH complexes shapes TR structural and functional avidity. The sequence is that of T cell receptor alpha variable 8-1 from Homo sapiens (Human).